Here is a 275-residue protein sequence, read N- to C-terminus: Bis(5'-nucleosyl)-tetraphosphatase, symmetrical (275 aa).

This sequence belongs to the Ap4A hydrolase family.

It carries out the reaction P(1),P(4)-bis(5'-adenosyl) tetraphosphate + H2O = 2 ADP + 2 H(+). Its function is as follows. Hydrolyzes diadenosine 5',5'''-P1,P4-tetraphosphate to yield ADP. The protein is Bis(5'-nucleosyl)-tetraphosphatase, symmetrical of Haemophilus influenzae (strain PittGG).